A 352-amino-acid chain; its full sequence is Alanine racemase (352 aa).

Residue lysine 33 is the Proton acceptor; specific for D-alanine of the active site. Lysine 33 is subject to N6-(pyridoxal phosphate)lysine. Arginine 129 lines the substrate pocket. Residue tyrosine 250 is the Proton acceptor; specific for L-alanine of the active site. Methionine 298 contributes to the substrate binding site.

Belongs to the alanine racemase family. Requires pyridoxal 5'-phosphate as cofactor.

The catalysed reaction is L-alanine = D-alanine. Its pathway is amino-acid biosynthesis; D-alanine biosynthesis; D-alanine from L-alanine: step 1/1. In terms of biological role, catalyzes the interconversion of L-alanine and D-alanine. May also act on other amino acids. The polypeptide is Alanine racemase (alr) (Neisseria meningitidis serogroup B (strain ATCC BAA-335 / MC58)).